A 296-amino-acid chain; its full sequence is Glycine and tyrosine-rich protein (296 aa).

The signal sequence occupies residues 1–18; the sequence is MKVLVTALIISFSTAVLT. The disordered stretch occupies residues 157–280; that stretch reads MESRLRPQAT…NQPEETPAPN (124 aa). The segment covering 172–264 has biased composition (low complexity); the sequence is TGGQPSTGGK…STGGQPSTGG (93 aa).

As to expression, component of the acid-insoluble and acid-soluble organic matrix of calcified layers of the shell (at protein level).

The protein localises to the secreted. The chain is Glycine and tyrosine-rich protein from Lottia gigantea (Giant owl limpet).